The chain runs to 1177 residues: MLQLLVLKIEDPGCFWVIIKGCSPFLDHDVDYQKLNSAMNDFYNSTCQDIEIKPLTLEEGQVCVVYCEELKCWCRAIVKSITSSADQYLAECFLVDFAKNIPVKSKNIRVVVESFMQLPYRAKKFSLYCTKPVTLHIDFCRDSTDIVPAKKWDNAAIQYFQNLLKATTQVEARLCAVEEDTFEVYLYVTIKDEKVCVNDDLVAKNYACYMSPTKNKNLDYLEKPRLNIKSAPSFNKLNPALTLWPMFLQGKDVQGMEDSHGVNFPAQSLQHTWCKGIVGDLRPTATAQDKAVKCNMDSLRDSPKDKSEKKHHCISLKDTNKRVESSVYWPAKRGITIYADPDVPEASALSQKSNEKPLRLTEKKEYDEKNSCVKLLQFLNPDPLRADGISDLQQLQKLKGLQPPVVVLRNKIKPCLTIDSSPLSADLKKALQRNKFPGPSHTESYSWPPIARGCDVVVISHCESNPLLYLLPVLTVLQTGACYKSLPSRNGPLAVIVCPGWKKAQFIFELLGEYSMSSRPLHPVLLTIGLHKEEAKNTKLPRGCDVIVTTPYSLLRLLACQSLLFLRLCHLILDEVEVLFLEANEQMFAILDNFKKNIEVEERESAPHQIVAVGVHWNKHIEHLIKEFMNDPYIVITAMEEAALYGNVQQVVHLCLECEKTSSLLQALDFIPSQAQKTLIFTCSVAETEIVCKVVESSSIFCLKMHKEMIFNLQNVLEQWKKKLSSGSQIILALTDDCVPLLAITDATCVIHFSFPASPKVFGGRLYCMSDHFHAEQGSPAEQGDKKAKSVLLLTEKDASHAVGVLRYLERADAKVPAELYEFTAGVLEAKEDKKAGRPLCPYLKAFGFCKDKRICPDRHRINPETDLPRKLSSQALPSFGYIKIIPFYILNATNYFGRIVDKHMDLYATLNAEMNEYFKDSNKTTVEKVEKFGLYGLAEKTLFHRVQVLEVNQKEDAWALDDILVEFIDEGRTGLVTRDQLLHLPEHFHTLPPQAVEFIVCRVKPADNEIEWNPKVTRYIHHKIVGKLHDAKVILALGNTVWIDPMVHITNLSSLKTSVIDYNVRAEILSMGMGIDNPEHIEQLKKLREDAKIPACEESLSQTPPRVTGTSPAQDQDHPSEEQGGQGTPPAEDAACLQSPQPEDTGAEGGAESKTSSENQKPGGYLVFKRWLSSNR.

A Tudor 1 domain is found at 56 to 118; that stretch reads TLEEGQVCVV…RVVVESFMQL (63 aa). One can recognise a Helicase ATP-binding domain in the interval 447-635; it reads WPPIARGCDV…KEFMNDPYIV (189 aa). ATP is bound at residue 460–467; that stretch reads SHCESNPL. The short motif at 574–577 is the DEAH box element; that stretch reads DEVE. Residues 900–999 form the Tudor 2 domain; the sequence is IVDKHMDLYA…HTLPPQAVEF (100 aa). Positions 1098-1177 are disordered; sequence EESLSQTPPR…VFKRWLSSNR (80 aa). Residues 1100 to 1115 show a composition bias toward polar residues; it reads SLSQTPPRVTGTSPAQ.

Component of a mRNP complex containing PIWIL2, TDRD1 and piRNAs. Component of the PET complex, at least composed of EXD1, PIWIL2, TDRD12 and piRNAs.

It carries out the reaction ATP + H2O = ADP + phosphate + H(+). Functionally, probable ATP-binding RNA helicase required during spermatogenesis to repress transposable elements and preventing their mobilization, which is essential for the germline integrity. Acts via the piRNA metabolic process, which mediates the repression of transposable elements during meiosis by forming complexes composed of piRNAs and Piwi proteins and governs the methylation and subsequent repression of transposons. Involved in the secondary piRNAs metabolic process. Acts via the PET complex, a multiprotein complex required during the secondary piRNAs metabolic process for the PIWIL2 slicing-triggered loading of PIWIL4 piRNAs. The protein is Putative ATP-dependent RNA helicase TDRD12 (TDRD12) of Homo sapiens (Human).